We begin with the raw amino-acid sequence, 510 residues long: Hexose carrier protein HEX6 (510 aa).

At 1 to 22 (MAAGLAITSEGGQYNGRMTSFV) the chain is on the cytoplasmic side. Helical transmembrane passes span 23–43 (ALSC…IGVS), 83–103 (SFTS…SSVT), 118–128 (VFLAXAALGGA), 140–160 (VLLG…LSEM), 169–189 (INNG…LINY), 202–222 (ISLA…LFLP), 284–304 (LVMA…VIAF), 325–345 (IVTG…VDKL), 349–369 (ALFI…GSIM), 382–402 (GYAY…GWSW), 428–448 (AVSF…LCHF), and 451–471 (GIFF…HFLL). Over 472-510 (PETKKVPIEKMDIVWRDHWFWKKIIGEEAAEENNKMEAA) the chain is Cytoplasmic.

It belongs to the major facilitator superfamily. Sugar transporter (TC 2.A.1.1) family.

Its subcellular location is the membrane. Active uptake of hexoses. Probable glucose/hydrogen symport. In Ricinus communis (Castor bean), this protein is Hexose carrier protein HEX6 (HEX6).